Here is a 271-residue protein sequence, read N- to C-terminus: ATP synthase subunit a (271 aa).

5 consecutive transmembrane segments (helical) span residues 31-51, 89-109, 124-144, 186-206, and 216-236; these read WDTI…GLYM, FVAP…WIGV, DINL…IVSL, IFSG…VLWL, and LGVG…YYAF. A disordered region spans residues 247–271; it reads DEHADGGDSSSRQASPTPLPAGQVR.

This sequence belongs to the ATPase A chain family. As to quaternary structure, F-type ATPases have 2 components, CF(1) - the catalytic core - and CF(0) - the membrane proton channel. CF(1) has five subunits: alpha(3), beta(3), gamma(1), delta(1), epsilon(1). CF(0) has three main subunits: a(1), b(2) and c(9-12). The alpha and beta chains form an alternating ring which encloses part of the gamma chain. CF(1) is attached to CF(0) by a central stalk formed by the gamma and epsilon chains, while a peripheral stalk is formed by the delta and b chains.

The protein resides in the cell membrane. Key component of the proton channel; it plays a direct role in the translocation of protons across the membrane. In Acidothermus cellulolyticus (strain ATCC 43068 / DSM 8971 / 11B), this protein is ATP synthase subunit a.